Reading from the N-terminus, the 142-residue chain is MVLSPADKTNIKTTWDKLGGHAGEYGGEALERTFMSFPTTKTYFPHFDLSPGSAQVKAHGKKVADALTTAVAHMDDLPKALSALSDLHAYKLRVDPVNFKLLSHCLLVTLACHHPAEFTPAVHASLDKFFSTVSTVLTSKYR.

Residues 2–142 (VLSPADKTNI…VSTVLTSKYR (141 aa)) enclose the Globin domain. Residue His-59 participates in O2 binding. Residue His-88 coordinates heme b.

Belongs to the globin family. As to quaternary structure, heterotetramer of two alpha chains and two beta chains. As to expression, red blood cells.

Its function is as follows. Involved in oxygen transport from the lung to the various peripheral tissues. This Arctocephalus galapagoensis (Galapagoes fur seal) protein is Hemoglobin subunit alpha-1.